The primary structure comprises 326 residues: Structural protein ORF326a (326 aa).

The disordered stretch occupies residues 1 to 28 (MSTTFRGKKEEEEEEEEEKEEKEEELFN). Positions 11–26 (EEEEEEEEKEEKEEEL) are enriched in acidic residues.

It localises to the virion. This chain is Structural protein ORF326a, found in Acidianus two-tailed virus (ATV).